Reading from the N-terminus, the 190-residue chain is Selenoprotein S (190 aa).

Residues 28 to 48 (SLLASYGWYILFSCVLLYIVI) form a helical membrane-spanning segment. The segment at 78–90 (RQEALAAARLRMQ) is VCP/p97-interacting motif (VIM). The disordered stretch occupies residues 96–190 (QVEKHKEKQR…RRGPSSGGUS (95 aa)). Residues 97-118 (VEKHKEKQRQLEEEKRRQKIEM) show a composition bias toward basic and acidic residues. Over residues 160–174 (RGGGYNPLTGEGGGT) the composition is skewed to gly residues. Sec-189 is a non-standard amino acid (selenocysteine).

This sequence belongs to the selenoprotein S family. As to quaternary structure, interacts with DERL1 and (via VIM motif) with VCP, suggesting that it forms a membrane complex with DERL1 that serves as a receptor for VCP. Also interacts with DERL2, DERL3 and SELENOK. The SELENOK-SELENOS complex interacts with VCP. Interacts with CCDC47. In terms of processing, truncated SELENOS proteins produced by failed UGA/Sec decoding are ubiquitinated by the CRL2(KLHDC2) and CRL2(KLHDC3) complexes, which recognizes the glycine (Gly) at the C-terminus of truncated SELENOS proteins. Truncated SELENOS proteins produced by failed UGA/Sec decoding are also ubiquitinated by the CRL5(KLHDC1) complex.

Its subcellular location is the endoplasmic reticulum membrane. The protein localises to the cytoplasm. In terms of biological role, involved in the degradation process of misfolded endoplasmic reticulum (ER) luminal proteins. Participates in the transfer of misfolded proteins from the ER to the cytosol, where they are destroyed by the proteasome in a ubiquitin-dependent manner. Probably acts by serving as a linker between DERL1, which mediates the retrotranslocation of misfolded proteins into the cytosol, and the ATPase complex VCP, which mediates the translocation and ubiquitination. This chain is Selenoprotein S, found in Rattus norvegicus (Rat).